The chain runs to 182 residues: uncharacterized protein (182 aa).

Positions 66-133 (QKRKRREIKV…NLEIETNSDS (68 aa)) form a coiled coil.

This is an uncharacterized protein from Acanthamoeba polyphaga (Amoeba).